The chain runs to 1251 residues: Phospholipid-transporting ATPase IC (1251 aa).

Residues methionine 1–glutamate 52 form a disordered region. Residues methionine 1–asparagine 121 lie on the Cytoplasmic side of the membrane. Acidic residues predominate over residues serine 25–aspartate 35. Basic and acidic residues predominate over residues glutamate 43–glutamate 52. Residues phenylalanine 122–tyrosine 142 form a helical membrane-spanning segment. At threonine 143–threonine 144 the chain is on the exoplasmic loop side. A helical transmembrane segment spans residues leucine 145–alanine 165. Over arginine 166–tyrosine 339 the chain is Cytoplasmic. The helical transmembrane segment at methionine 340–alanine 360 threads the bilayer. The Exoplasmic loop segment spans residues tyrosine 361–glycine 385. A helical membrane pass occupies residues phenylalanine 386–valine 406. Topologically, residues serine 407 to arginine 952 are cytoplasmic. The 4-aspartylphosphate intermediate role is filled by aspartate 454. ATP contacts are provided by aspartate 454, lysine 455, threonine 456, glutamate 555, phenylalanine 596, lysine 619, arginine 652, threonine 732, glycine 733, aspartate 734, arginine 867, and lysine 873. Aspartate 454 lines the Mg(2+) pocket. Threonine 456 contributes to the Mg(2+) binding site. Aspartate 893 contacts Mg(2+). ATP contacts are provided by asparagine 896 and aspartate 897. Aspartate 897 is a Mg(2+) binding site. The helical transmembrane segment at tyrosine 953 to glycine 973 threads the bilayer. Topologically, residues tyrosine 974–aspartate 982 are exoplasmic loop. Residues tryptophan 983–leucine 1003 traverse the membrane as a helical segment. The Cytoplasmic segment spans residues aspartate 1004–arginine 1032. The helical transmembrane segment at phenylalanine 1033–glycine 1053 threads the bilayer. Residues alanine 1054–serine 1071 lie on the Exoplasmic loop side of the membrane. The helical transmembrane segment at phenylalanine 1072–threonine 1092 threads the bilayer. Residues serine 1093–tyrosine 1094 are Cytoplasmic-facing. The chain crosses the membrane as a helical span at residues tryptophan 1095–phenylalanine 1115. Topologically, residues aspartate 1116–glutamine 1142 are exoplasmic loop. The helical transmembrane segment at proline 1143–isoleucine 1163 threads the bilayer. At arginine 1164 to serine 1251 the chain is on the cytoplasmic side. The residue at position 1223 (serine 1223) is a Phosphoserine.

It belongs to the cation transport ATPase (P-type) (TC 3.A.3) family. Type IV subfamily. Component of a P4-ATPase flippase complex which consists of a catalytic alpha subunit ATP8B1 and an accessory beta subunit TMEM30A. The flippase ATP8B1:TMEM30A complex can form an intermediate phosphoenzyme in vitro. Also interacts with beta subunit TMEM30B. Requires Mg(2+) as cofactor. As to expression, hepatocytes, bile duct, intestinal epithelial cells (cholangiocytes and ileocytes), and pancreatic acinar cells.

The protein resides in the cell membrane. Its subcellular location is the apical cell membrane. It localises to the cell projection. It is found in the stereocilium. The protein localises to the endoplasmic reticulum. The protein resides in the golgi apparatus. The enzyme catalyses ATP + H2O + phospholipidSide 1 = ADP + phosphate + phospholipidSide 2.. It catalyses the reaction a 1,2-diacyl-sn-glycero-3-phosphocholine(out) + ATP + H2O = a 1,2-diacyl-sn-glycero-3-phosphocholine(in) + ADP + phosphate + H(+). The catalysed reaction is a 1,2-diacyl-sn-glycero-3-phospho-L-serine(out) + ATP + H2O = a 1,2-diacyl-sn-glycero-3-phospho-L-serine(in) + ADP + phosphate + H(+). Catalytic component of a P4-ATPase flippase complex which catalyzes the hydrolysis of ATP coupled to the transport of phospholipids, in particular phosphatidylcholines (PC), from the outer to the inner leaflet of the plasma membrane. May participate in the establishment of the canalicular membrane integrity by ensuring asymmetric distribution of phospholipids in the canicular membrane. Thus may have a role in the regulation of bile acids transport into the canaliculus, uptake of bile acids from intestinal contents into intestinal mucosa or both and protect hepatocytes from bile salts. Involved in the microvillus formation in polarized epithelial cells; the function seems to be independent from its flippase activity. Participates in correct apical membrane localization of CDC42, CFTR and SLC10A2. Enables CDC42 clustering at the apical membrane during enterocyte polarization through the interaction between CDC42 polybasic region and negatively charged membrane lipids provided by ATP8B1. Together with TMEM30A is involved in uptake of the synthetic drug alkylphospholipid perifosine. Required for the preservation of cochlear hair cells in the inner ear. According PubMed:20852622 is proposed to act as cardiolipin transporter during inflammatory injury; the function is questioned by PubMed:21475228. This Mus musculus (Mouse) protein is Phospholipid-transporting ATPase IC.